The primary structure comprises 198 residues: MMNFIRTLLIYEIILLKIYHIIKLLHQQQVVAYPTEAMFGLGCDPDSEKAVHTLLTLKKRDWQKGLILVAANYEQLANYIDDNSLNINQRARMFSLWPGPITWTIPARTTTPCWLTGKFSTLAVRISAFKPVRMLCLAFGKPIVSTSANVSGQSPARNICEVRQQFGAAFPVMDQIIEGRYSPSEIRDAISGQLIRRG.

One can recognise a YrdC-like domain in the interval 15-198 (LLKIYHIIKL…AISGQLIRRG (184 aa)).

The protein belongs to the SUA5 family. TsaC subfamily.

It localises to the cytoplasm. It catalyses the reaction L-threonine + hydrogencarbonate + ATP = L-threonylcarbamoyladenylate + diphosphate + H2O. Required for the formation of a threonylcarbamoyl group on adenosine at position 37 (t(6)A37) in tRNAs that read codons beginning with adenine. Catalyzes the conversion of L-threonine, HCO(3)(-)/CO(2) and ATP to give threonylcarbamoyl-AMP (TC-AMP) as the acyladenylate intermediate, with the release of diphosphate. The sequence is that of Threonylcarbamoyl-AMP synthase from Baumannia cicadellinicola subsp. Homalodisca coagulata.